A 226-amino-acid chain; its full sequence is MDARKEGLPLETLFSDQYPQVRRWLAPFILACSLYFLLWIPVDQPSWVSALIKCQPILCLVVFLWAVAPGGSSTWLLQGALVCSAVGDACLIWPEAFFYGTAAFSVAHLFYLGAFGLTPLQPGLLLCTTLASLTYYSFLLLHLEQGMVLPVMAYGLILNSMLWRSLVWGGSASWGAVLFTFSDGVLAWDTFVYSLPFARLVTMSTYYAAQLLLILSALRNPGLKTH.

The Cytoplasmic segment spans residues 1-23 (MDARKEGLPLETLFSDQYPQVRR). The chain crosses the membrane as a helical span at residues 24-40 (WLAPFILACSLYFLLWI). Residues 41-46 (PVDQPS) lie on the Extracellular side of the membrane. The chain crosses the membrane as a helical span at residues 47 to 68 (WVSALIKCQPILCLVVFLWAVA). At 69–74 (PGGSST) the chain is on the cytoplasmic side. A helical transmembrane segment spans residues 75 to 93 (WLLQGALVCSAVGDACLIW). Residues 94 to 99 (PEAFFY) are Extracellular-facing. The helical transmembrane segment at 100–117 (GTAAFSVAHLFYLGAFGL) threads the bilayer. The Cytoplasmic portion of the chain corresponds to 118–123 (TPLQPG). The chain crosses the membrane as a helical span at residues 124–140 (LLLCTTLASLTYYSFLL). Topologically, residues 141 to 146 (LHLEQG) are extracellular. The chain crosses the membrane as a helical span at residues 147–163 (MVLPVMAYGLILNSMLW). At 164–171 (RSLVWGGS) the chain is on the cytoplasmic side. A helical transmembrane segment spans residues 172–188 (ASWGAVLFTFSDGVLAW). Residues 189–199 (DTFVYSLPFAR) are Extracellular-facing. A helical membrane pass occupies residues 200-218 (LVTMSTYYAAQLLLILSAL). Topologically, residues 219-226 (RNPGLKTH) are cytoplasmic.

It belongs to the TMEM86 family. As to quaternary structure, homodimer. In terms of tissue distribution, enriched in liver. Also detected in brain and testis.

Its subcellular location is the endoplasmic reticulum membrane. It is found in the cytoplasm. The catalysed reaction is a 1-O-(1Z-alkenyl)-sn-glycero-3-phosphocholine + H2O = a 2,3-saturated aldehyde + sn-glycerol 3-phosphocholine. It carries out the reaction a 1-O-(1Z-alkenyl)-sn-glycero-3-phosphoethanolamine + H2O = a 2,3-saturated aldehyde + sn-glycero-3-phosphoethanolamine. Competitively inhibited by lysophosphatidic acid. In terms of biological role, catalyzes the hydrolysis of the vinyl ether bond of choline or ethanolamine lysoplasmalogens, forming fatty aldehyde and glycerophosphocholine or glycerophosphoethanolamine, respectively and is specific for the sn-2-deacylated (lyso) form of plasmalogen. The chain is Lysoplasmalogenase TMEM86B (Tmem86b) from Mus musculus (Mouse).